The following is a 308-amino-acid chain: Glutaminase (308 aa).

The substrate site is built by S66, N117, E161, N168, Y192, Y244, and V262.

This sequence belongs to the glutaminase family. Homotetramer.

It catalyses the reaction L-glutamine + H2O = L-glutamate + NH4(+). This is Glutaminase from Klebsiella pneumoniae subsp. pneumoniae (strain ATCC 700721 / MGH 78578).